A 277-amino-acid polypeptide reads, in one-letter code: Endochitinase CHI (277 aa).

Residues M1–S31 form the signal peptide. Residues Q32–S66 enclose the Chitin-binding type-1 domain. 4 cysteine pairs are disulfide-bonded: C34/C42, C36/C48, C41/C55, and C59/C64. Positions V75 to C277 are catalytic. The active-site Proton donor is E136. An N-linked (GlcNAc...) asparagine glycan is attached at N274.

It belongs to the glycosyl hydrolase 19 family. Chitinase class I subfamily.

It catalyses the reaction Random endo-hydrolysis of N-acetyl-beta-D-glucosaminide (1-&gt;4)-beta-linkages in chitin and chitodextrins.. This Arabidopsis thaliana (Mouse-ear cress) protein is Endochitinase CHI.